A 343-amino-acid polypeptide reads, in one-letter code: LRP2-binding protein (343 aa).

The TPR repeat unit spans residues 58–91; it reads SQATFLLGQLHYVQGCYAEAELIFDRIKDKDPQA. Sel1-like repeat units lie at residues 92 to 124, 132 to 167, 172 to 205, 206 to 241, 242 to 273, and 293 to 328; these read LYQL…FWDS, YAAL…DNGN, VKAQ…GNGS, LESQ…ERGS, VYAQ…EYKD, and AIGM…RIDP.

The protein resides in the cytoplasm. In terms of biological role, may act as an adapter that regulates LRP2 function. The protein is LRP2-binding protein (lrp2bp) of Danio rerio (Zebrafish).